The following is a 169-amino-acid chain: 3-hydroxyacyl-[acyl-carrier-protein] dehydratase FabZ (169 aa).

His66 is a catalytic residue.

Belongs to the thioester dehydratase family. FabZ subfamily.

The protein localises to the cytoplasm. It catalyses the reaction a (3R)-hydroxyacyl-[ACP] = a (2E)-enoyl-[ACP] + H2O. Its function is as follows. Involved in unsaturated fatty acids biosynthesis. Catalyzes the dehydration of short chain beta-hydroxyacyl-ACPs and long chain saturated and unsaturated beta-hydroxyacyl-ACPs. The protein is 3-hydroxyacyl-[acyl-carrier-protein] dehydratase FabZ of Helicobacter hepaticus (strain ATCC 51449 / 3B1).